The sequence spans 220 residues: Small ribosomal subunit protein uS3c (220 aa).

Residues 39–120 (IRDFIKNYVK…KLIIDIIRIT (82 aa)) form the KH type-2 domain.

The protein belongs to the universal ribosomal protein uS3 family. As to quaternary structure, part of the 30S ribosomal subunit.

It localises to the plastid. This Epifagus virginiana (Beechdrops) protein is Small ribosomal subunit protein uS3c (rps3).